Reading from the N-terminus, the 488-residue chain is 3-octaprenyl-4-hydroxybenzoate carboxy-lyase (488 aa).

Asn-172 contributes to the Mn(2+) binding site. Prenylated FMN is bound by residues 175-177 (IYR), 189-191 (RWL), and 194-195 (RG). Glu-238 contacts Mn(2+). Residue Asp-287 is the Proton donor of the active site.

This sequence belongs to the UbiD family. In terms of assembly, homohexamer. It depends on prenylated FMN as a cofactor. Requires Mn(2+) as cofactor.

The protein localises to the cell membrane. It carries out the reaction a 4-hydroxy-3-(all-trans-polyprenyl)benzoate + H(+) = a 2-(all-trans-polyprenyl)phenol + CO2. It participates in cofactor biosynthesis; ubiquinone biosynthesis. In terms of biological role, catalyzes the decarboxylation of 3-octaprenyl-4-hydroxy benzoate to 2-octaprenylphenol, an intermediate step in ubiquinone biosynthesis. This is 3-octaprenyl-4-hydroxybenzoate carboxy-lyase from Pseudomonas syringae pv. syringae (strain B728a).